The following is a 751-amino-acid chain: Photosystem I P700 chlorophyll a apoprotein A1 (751 aa).

A run of 8 helical transmembrane segments spans residues 73–96 (IFSAHFGQLGVILIWLSGMYFHGA), 159–182 (LYSTAIGGLLLAAAMFFAGWFHYH), 198–222 (MNHHLGGLLGLGSLGWAGHQIHVSL), 294–312 (TAHHHVAIAVLFLVAGHMY), 349–372 (WHAQLAINLALFGSLSIVVAHHMY), 388–414 (LSLFTHHMWIGGFCVVGAAAHAAIFMV), 436–458 (AIISHLNWVCIFLGFHSFGLYIH), and 533–551 (FLVHHIHAFTIHVTVLILL). 2 residues coordinate [4Fe-4S] cluster: Cys575 and Cys584. The next 2 membrane-spanning stretches (helical) occupy residues 591-612 (HVFLGLFWMYNSISVVIFHFSW) and 665-687 (LSAYGLIFLGAHFIWAFSLMFLF). His676 provides a ligand contact to chlorophyll a'. Residues Met684 and Tyr692 each contribute to the chlorophyll a site. Trp693 is a binding site for phylloquinone. Residues 725-745 (AVGVAHYLLGGIATTWAFFLA) traverse the membrane as a helical segment.

The protein belongs to the PsaA/PsaB family. The PsaA/B heterodimer binds the P700 chlorophyll special pair and subsequent electron acceptors. PSI consists of a core antenna complex that captures photons, and an electron transfer chain that converts photonic excitation into a charge separation. The eukaryotic PSI reaction center is composed of at least 11 subunits. Requires P700 is a chlorophyll a/chlorophyll a' dimer, A0 is one or more chlorophyll a, A1 is one or both phylloquinones and FX is a shared 4Fe-4S iron-sulfur center. as cofactor.

The protein resides in the plastid. It localises to the chloroplast thylakoid membrane. It catalyses the reaction reduced [plastocyanin] + hnu + oxidized [2Fe-2S]-[ferredoxin] = oxidized [plastocyanin] + reduced [2Fe-2S]-[ferredoxin]. Functionally, psaA and PsaB bind P700, the primary electron donor of photosystem I (PSI), as well as the electron acceptors A0, A1 and FX. PSI is a plastocyanin/cytochrome c6-ferredoxin oxidoreductase, converting photonic excitation into a charge separation, which transfers an electron from the donor P700 chlorophyll pair to the spectroscopically characterized acceptors A0, A1, FX, FA and FB in turn. Oxidized P700 is reduced on the lumenal side of the thylakoid membrane by plastocyanin or cytochrome c6. This Nephroselmis olivacea (Green alga) protein is Photosystem I P700 chlorophyll a apoprotein A1.